The sequence spans 201 residues: 3-isopropylmalate dehydratase small subunit (201 aa).

It belongs to the LeuD family. LeuD type 1 subfamily. In terms of assembly, heterodimer of LeuC and LeuD.

It carries out the reaction (2R,3S)-3-isopropylmalate = (2S)-2-isopropylmalate. The protein operates within amino-acid biosynthesis; L-leucine biosynthesis; L-leucine from 3-methyl-2-oxobutanoate: step 2/4. Its function is as follows. Catalyzes the isomerization between 2-isopropylmalate and 3-isopropylmalate, via the formation of 2-isopropylmaleate. The sequence is that of 3-isopropylmalate dehydratase small subunit from Shewanella baltica (strain OS223).